The primary structure comprises 386 residues: Epoxyqueuosine reductase (386 aa).

Residues R57, C97, D134, 139–141, S152, N155, I158, and L169 contribute to the cob(II)alamin site; that span reads SDR. The active-site Proton donor is the D134. The 31-residue stretch at 178–208 folds into the 4Fe-4S ferredoxin-type domain; that stretch reads FEPDVPIEDMCGSCTKCLDACPTGALVNPGQ. Residues C188, C191, C194, C198, and C214 each contribute to the [4Fe-4S] cluster site. Residue S216 coordinates cob(II)alamin. The tRNA site is built by Q220 and K222. The [4Fe-4S] cluster site is built by C240, C243, and C247. Position 240-241 (240-241) interacts with cob(II)alamin; sequence CD. Residues N280, R281, R295, K297, and K298 each coordinate tRNA. One copy of the HEAT-like PBS-type repeat lies at 333 to 357; the sequence is RGTAAWAIGKIGDPAYAEELEKALE.

It belongs to the QueG family. In terms of assembly, monomer. It depends on cob(II)alamin as a cofactor. The cofactor is [4Fe-4S] cluster.

The protein localises to the cytoplasm. The catalysed reaction is epoxyqueuosine(34) in tRNA + AH2 = queuosine(34) in tRNA + A + H2O. The protein operates within tRNA modification; tRNA-queuosine biosynthesis. Functionally, catalyzes the conversion of epoxyqueuosine (oQ) to queuosine (Q), which is a hypermodified base found in the wobble positions of tRNA(Asp), tRNA(Asn), tRNA(His) and tRNA(Tyr). This chain is Epoxyqueuosine reductase, found in Bacillus subtilis (strain 168).